Consider the following 34-residue polypeptide: Photosystem I reaction center subunit XII (34 aa).

A helical membrane pass occupies residues 4–24; the sequence is VLSAPEVFIALVVAAHAAVLA.

It belongs to the PsaM family.

It localises to the cellular thylakoid membrane. The chain is Photosystem I reaction center subunit XII from Synechococcus sp. (strain CC9605).